The following is a 434-amino-acid chain: Maintenance of mitochondrial morphology protein 1 (434 aa).

Residues 1–105 lie on the Lumenal side of the membrane; that stretch reads MEMSELLASE…SFSSQSFAEG (105 aa). A helical membrane pass occupies residues 106-126; it reads LIVGQLSVIVALIFVIKFFVF. Topologically, residues 127–434 are cytoplasmic; it reads SEGGTKTATA…DDSVSVKSND (308 aa). Residues 194-408 form the SMP-LTD domain; sequence SPESLDWFNV…EPRFQFVKLP (215 aa). The segment at 415–434 is disordered; that stretch reads KNTRKEKTDTDDSVSVKSND.

Belongs to the MMM1 family. As to quaternary structure, homodimer. Component of the ER-mitochondria encounter structure (ERMES) or MDM complex, composed of MMM1, MDM10, MDM12 and MDM34. An MMM1 homodimer associates with one molecule of MDM12 on each side in a pairwise head-to-tail manner, and the SMP-LTD domains of MMM1 and MDM12 generate a continuous hydrophobic tunnel for phospholipid trafficking.

The protein resides in the endoplasmic reticulum membrane. Its function is as follows. Component of the ERMES/MDM complex, which serves as a molecular tether to connect the endoplasmic reticulum (ER) and mitochondria. Components of this complex are involved in the control of mitochondrial shape and protein biogenesis, and function in nonvesicular lipid trafficking between the ER and mitochondria. The MDM12-MMM1 subcomplex functions in the major beta-barrel assembly pathway that is responsible for biogenesis of all outer membrane beta-barrel proteins, and acts in a late step after the SAM complex. The MDM10-MDM12-MMM1 subcomplex further acts in the TOM40-specific pathway after the action of the MDM12-MMM1 complex. Essential for establishing and maintaining the structure of mitochondria and maintenance of mtDNA nucleoids. The polypeptide is Maintenance of mitochondrial morphology protein 1 (Kluyveromyces lactis (strain ATCC 8585 / CBS 2359 / DSM 70799 / NBRC 1267 / NRRL Y-1140 / WM37) (Yeast)).